The chain runs to 66 residues: ERDGYIVQLHNCVYHCGLNPYCNGLCTKNGATSGSYCQWMTKWGNACYCYALPDKVPIKWLDPKCY.

The 65-residue stretch at R2–Y66 folds into the LCN-type CS-alpha/beta domain. 4 disulfides stabilise this stretch: C12–C65, C16–C37, C22–C47, and C26–C49.

Belongs to the long (4 C-C) scorpion toxin superfamily. Sodium channel inhibitor family. Alpha subfamily. As to expression, expressed by the venom gland.

Its subcellular location is the secreted. Functionally, alpha toxins bind voltage-independently at site-3 of sodium channels (Nav) and inhibit the inactivation of the activated channels, thereby blocking neuronal transmission. This toxin possesses a high paralytic activity against mice. The polypeptide is Toxin Os1 (Orthochirus scrobiculosus (Central Asian scorpion)).